Consider the following 644-residue polypeptide: Phosphomethylpyrimidine synthase (644 aa).

Residues Asn236, Met265, Tyr294, His330, 350–352, 391–394, and Glu430 each bind substrate; these read SRG and DGLR. Position 434 (His434) interacts with Zn(2+). Tyr457 serves as a coordination point for substrate. His498 is a Zn(2+) binding site. Residues Cys578, Cys581, and Cys586 each contribute to the [4Fe-4S] cluster site.

The protein belongs to the ThiC family. Homodimer. The cofactor is [4Fe-4S] cluster.

The catalysed reaction is 5-amino-1-(5-phospho-beta-D-ribosyl)imidazole + S-adenosyl-L-methionine = 4-amino-2-methyl-5-(phosphooxymethyl)pyrimidine + CO + 5'-deoxyadenosine + formate + L-methionine + 3 H(+). The protein operates within cofactor biosynthesis; thiamine diphosphate biosynthesis. In terms of biological role, catalyzes the synthesis of the hydroxymethylpyrimidine phosphate (HMP-P) moiety of thiamine from aminoimidazole ribotide (AIR) in a radical S-adenosyl-L-methionine (SAM)-dependent reaction. The sequence is that of Phosphomethylpyrimidine synthase from Aliivibrio fischeri (strain ATCC 700601 / ES114) (Vibrio fischeri).